The sequence spans 586 residues: Phosphomethylpyrimidine synthase (586 aa).

Residues 1–33 (MKQSVSAEQIELKSSLPGSKKVYVDGPREGMKV) form a disordered region. Positions 22–33 (VYVDGPREGMKV) are enriched in basic and acidic residues. Substrate is bound by residues Asn193, Met222, Tyr251, His287, 307-309 (SRG), 348-351 (DGLR), and Glu387. His391 is a Zn(2+) binding site. A substrate-binding site is contributed by Tyr414. His455 contacts Zn(2+). Residues Cys535, Cys538, and Cys543 each coordinate [4Fe-4S] cluster.

Belongs to the ThiC family. The cofactor is [4Fe-4S] cluster.

It carries out the reaction 5-amino-1-(5-phospho-beta-D-ribosyl)imidazole + S-adenosyl-L-methionine = 4-amino-2-methyl-5-(phosphooxymethyl)pyrimidine + CO + 5'-deoxyadenosine + formate + L-methionine + 3 H(+). Its pathway is cofactor biosynthesis; thiamine diphosphate biosynthesis. Catalyzes the synthesis of the hydroxymethylpyrimidine phosphate (HMP-P) moiety of thiamine from aminoimidazole ribotide (AIR) in a radical S-adenosyl-L-methionine (SAM)-dependent reaction. The polypeptide is Phosphomethylpyrimidine synthase (Bacillus cereus (strain G9842)).